The following is a 419-amino-acid chain: MLPPFIVAGLFSSYILIMGLMFSQISHVSNSNASVSSAAKSLESLRVKRDLIGLSGKELLKYFKTNLPTISSNSVFANLDHPLGVTKVSQLYDAFHDYLFGEDQRPIVQKLTQDVTIIPNVHSHNDYWRSLPLFEALMYGVTSVEADVWLTENNTSLSVSHDTRHIDPKHKSLDILYTQPLLEMLNHVNGPQNYHHSDVKEIFDEQDNKMHGVFYGDSSRSLQLLIDFKSENNEKTYELLMSKYLKPFIQRNYLTYLDLTTNEIIRGPLTIVLTGNYPIKESILDYESEDATSESNNHELNKGYFRDNKRYVFLDLPLHKQQLLAKLPTSVLSSASLSQLLTKCQSSLMLLKLRGHLSDDELKCIKKYINHAKEYHLATRIWGIPDWPISTRNRLWKQQFYDLNVDYINTDDLKDIANF.

The signal sequence occupies residues 1–31 (MLPPFIVAGLFSSYILIMGLMFSQISHVSNS).

This sequence belongs to the AIM6 family.

This Kluyveromyces lactis (strain ATCC 8585 / CBS 2359 / DSM 70799 / NBRC 1267 / NRRL Y-1140 / WM37) (Yeast) protein is Altered inheritance of mitochondria protein 6 (AIM6).